The sequence spans 532 residues: uncharacterized protein (532 aa).

Disordered regions lie at residues K26–E84, V97–R129, and S157–Q470. Over residues G30–G40 the composition is skewed to low complexity. The segment covering D67–R80 has biased composition (polar residues). Residues S157–E181 show a composition bias toward basic and acidic residues. The segment covering I198 to D213 has biased composition (low complexity). The span at V237 to Q249 shows a compositional bias: basic and acidic residues. Composition is skewed to low complexity over residues P259–E290, E298–K315, and S326–S335. Positions K347–A356 are enriched in basic residues. 4 stretches are compositionally biased toward basic and acidic residues: residues K357–E368, S389–K403, K410–R419, and R437–R448. The span at R449–R461 shows a compositional bias: basic residues.

This is an uncharacterized protein from Caenorhabditis elegans.